Here is an 820-residue protein sequence, read N- to C-terminus: Leucine--tRNA ligase (820 aa).

The short motif at 40 to 51 (PYPSGAGLHVGH) is the 'HIGH' region element. Positions 601–605 (KMSKS) match the 'KMSKS' region motif. Residue K604 participates in ATP binding.

The protein belongs to the class-I aminoacyl-tRNA synthetase family.

The protein resides in the cytoplasm. It catalyses the reaction tRNA(Leu) + L-leucine + ATP = L-leucyl-tRNA(Leu) + AMP + diphosphate. This Chlamydia felis (strain Fe/C-56) (Chlamydophila felis) protein is Leucine--tRNA ligase.